The following is a 246-amino-acid chain: MKKPPVPLLQNGVRADGRLPDQMREVKISVGVVSNADGSAMVSYGATTAVAAVYGPREMHPRHLSLPDRGVMRVRYHMAPFSTKDERKSPTPSRREIEISKVLREALEPAVLLEQYPRSRIDVFIEIIQADGSTRVASLTAASLALADAGIYMRDLVVGVSVGLVDGVVVLDLNGLEDNYGEGDLPVGYMPNLKRFVLLQLDGAWKREVFLQALNLAVKGAEYVYQIARDALKNKYMSIAEEIYGR.

The protein belongs to the RNase PH family. Rrp41 subfamily. As to quaternary structure, component of the archaeal exosome complex. Forms a hexameric ring-like arrangement composed of 3 Rrp41-Rrp42 heterodimers. The hexameric ring associates with a trimer of Rrp4 and/or Csl4 subunits.

Its subcellular location is the cytoplasm. Its function is as follows. Catalytic component of the exosome, which is a complex involved in RNA degradation. Has 3'-&gt;5' exoribonuclease activity. Can also synthesize heteromeric RNA-tails. This chain is Exosome complex component Rrp41, found in Pyrobaculum arsenaticum (strain DSM 13514 / JCM 11321 / PZ6).